The chain runs to 974 residues: MHQHPRSSVPSPAPNFPPRPTARDDRREQEAAPSSPTVDMGSNSARGLGIEPGPQPSEQGRNAALGREALTRLNQIISNYHTKAALIILHSRVALPPSFNKGSESPRVNRWFNVELDDTDVLREPLRPWRTCDATDNRPPPLVIETYLDTKGLTNNQSLVILDENGKRWDVRESLAALQGARAKPYQSENDEIILERWRIELGESSSRLPADLGSILPTVYKKSIVLFRSLFTYSKFLPAWRFSKRNKKLRQSPALQIKYRVVDGSVARDDLSLDHLTAPLSEGSEKVVDTYSFGVTESPAGPFSVQVTYRTNCDFRVDDSEALLSSRFMGADDEIFRPSLPSDDVNRPNPEIGSVPVERKAVENPDCTRAYGSLSTFHQVGPTTGASPISTLRAMRDSGAGSPSPTDSPKRLLPPAKVVPSGRAGQIAGEGGSSNFQRRPSVSFQPFKAPPLSASPALADSPLGMSPRNMSSRIPTGTSADSRVMPPPSSAASARRPTTIASEQAISSSNSASPKPAPISRYSSSFSHRRGRLSAGANRLEDDNSSGRASATSSNAQPGSGLLTEATGTSAESIQADDENISEFLKMLDSKKDLMNSSTSASIQPGPSTTAAALARFRGMRDSNAALSDSMSQSMHMHRSSISSSKQLSGVPPMVAGTSISTASSPGKPMSPHTPHTPHTPAIRSRLSSNSVADDIETDHHSRLPRIHHDPPLEEHSSAENTRAPSSTAGAIDIPTSPRIFNPAYRRSSSAAVRRPIVTSDDDEIFPFGIRSLSLGADESANATLGATQQQNESQKDQQSPAEDRSGPSVSTTGPYRDSASLRGQMSGPTSASASSNPHVYQPRFASSRGRGYSGGHSLSSASSSLARGANLTPHLAERDQDRDGNASGSNSGNSTLEIRRGSGQRPSTGRTLSGQAPEDDEPLLFAMSDFGASRRSLDEGRHGNHGGTESAAGSRRGSGRRGAGLPGFHVWS.

A compositionally biased stretch (polar residues) spans 1–10; that stretch reads MHQHPRSSVP. Disordered stretches follow at residues 1-61, 379-575, 661-689, 703-743, and 787-974; these read MHQH…EQGR, HQVG…AESI, ISTA…SRLS, SRLP…RIFN, and GATQ…HVWS. Pro residues predominate over residues 11–20; sequence SPAPNFPPRP. Residues 21–30 are compositionally biased toward basic and acidic residues; it reads TARDDRREQE. Polar residues-rich tracts occupy residues 32-45, 379-391, and 434-445; these read APSS…SNSA, HQVG…SPIS, and SSNFQRRPSVSF. Residues 451–464 show a composition bias toward low complexity; that stretch reads PPLSASPALADSPL. The span at 469–482 shows a compositional bias: polar residues; the sequence is RNMSSRIPTGTSAD. A compositionally biased stretch (low complexity) spans 491–521; sequence SAASARRPTTIASEQAISSSNSASPKPAPIS. A compositionally biased stretch (polar residues) spans 547-559; that stretch reads SGRASATSSNAQP. Residues 703–719 are compositionally biased toward basic and acidic residues; sequence SRLPRIHHDPPLEEHSS. A compositionally biased stretch (polar residues) spans 720 to 730; it reads AENTRAPSSTA. Low complexity predominate over residues 790–800; sequence QQQNESQKDQQ. Polar residues predominate over residues 823–840; it reads LRGQMSGPTSASASSNPH. The segment covering 848 to 873 has biased composition (low complexity); it reads SSRGRGYSGGHSLSSASSSLARGANL. A compositionally biased stretch (basic and acidic residues) spans 877 to 886; the sequence is LAERDQDRDG. A compositionally biased stretch (low complexity) spans 887 to 896; it reads NASGSNSGNS. Polar residues predominate over residues 906–916; it reads QRPSTGRTLSG.

It belongs to the ATG13 family. Fungi subfamily. Interacts with atg1 to form the atg1-atg13 kinase complex.

It is found in the cytoplasm. Its subcellular location is the preautophagosomal structure. Activates the atg1 kinase in a nutritional condition dependent manner through the TOR pathway, leading to autophagy. Also involved in cytoplasm to vacuole transport (Cvt) and more specifically in Cvt vesicle formation. Seems to play a role in the switching machinery regulating the conversion between the Cvt pathway and autophagy. Finally, atg13 is also required for glycogen storage during stationary phase. The sequence is that of Autophagy-related protein 13 (atg13) from Penicillium rubens (strain ATCC 28089 / DSM 1075 / NRRL 1951 / Wisconsin 54-1255) (Penicillium chrysogenum).